Here is a 766-residue protein sequence, read N- to C-terminus: Tetratricopeptide repeat protein 14 (766 aa).

The segment at 35-55 (LGTAAEPARGAAPPPGAGRKE) is disordered. Positions 125 to 207 (GDIVIGRISS…YHEKLAVSLY (83 aa)) constitute an S1 motif domain. TPR repeat units lie at residues 209–242 (SSLP…NSNS), 306–339 (ALKC…DKQN), 341–373 (EALV…CPTH), and 381–414 (CQTL…DETF). The disordered stretch occupies residues 463–743 (EEKRLKKKRR…PDSRVKKNLP (281 aa)). Positions 475–496 (SSSSSVSSADESVSSSSSSSSS) are enriched in low complexity. A compositionally biased stretch (basic residues) spans 497 to 506 (SHKRHKKSKR). Positions 539-550 (PTNTSASFLNQK) are enriched in polar residues. The segment covering 551 to 562 (QEVEKLLEKQDR) has biased composition (basic and acidic residues). Residues 594 to 605 (FYNSYKTQAGSS) show a composition bias toward polar residues. Composition is skewed to basic and acidic residues over residues 606 to 616 (KTEKPYKSERH) and 629 to 657 (NSED…RRWE). Residues 661 to 673 (VKYSTSPASSDYS) show a composition bias toward polar residues. A Phosphoserine modification is found at Ser666. Residues 707–738 (RVYEKEDSCGEGNRNEAPEEMLNSKEQPDSRV) are compositionally biased toward basic and acidic residues.

The protein belongs to the TTC14 family.

This Mus musculus (Mouse) protein is Tetratricopeptide repeat protein 14.